Consider the following 200-residue polypeptide: 3-isopropylmalate dehydratase small subunit (200 aa).

The protein belongs to the LeuD family. LeuD type 1 subfamily. As to quaternary structure, heterodimer of LeuC and LeuD.

The enzyme catalyses (2R,3S)-3-isopropylmalate = (2S)-2-isopropylmalate. Its pathway is amino-acid biosynthesis; L-leucine biosynthesis; L-leucine from 3-methyl-2-oxobutanoate: step 2/4. In terms of biological role, catalyzes the isomerization between 2-isopropylmalate and 3-isopropylmalate, via the formation of 2-isopropylmaleate. The sequence is that of 3-isopropylmalate dehydratase small subunit from Proteus mirabilis (strain HI4320).